Here is a 37-residue protein sequence, read N- to C-terminus: Potassium channel toxin alpha-KTx 3.9 (37 aa).

Cystine bridges form between cysteine 7–cysteine 27, cysteine 13–cysteine 32, and cysteine 17–cysteine 34. The interval 25 to 32 is interaction with Ca(2+)-activated K(+) channels; that stretch reads GKCMNRKC.

Belongs to the short scorpion toxin superfamily. Potassium channel inhibitor family. Alpha-KTx 03 subfamily. In terms of tissue distribution, expressed by the venom gland.

Its subcellular location is the secreted. Functionally, binds and inhibits potassium channels. Intracerebroventricular injection into mice induces paralyzing symptoms followed by death. Its binding affinity to rat brain synaptosomes is 5-fold lower than this of KTX 1. The chain is Potassium channel toxin alpha-KTx 3.9 (KTX3) from Buthus occitanus tunetanus (Common European scorpion).